The primary structure comprises 379 residues: Guanine nucleotide-binding protein G(s) subunit alpha (379 aa).

The interval 1–29 (MGCFGSAGAKGDAEENKKRKEANKNINKQ) is disordered. G2 carries the N-palmitoyl glycine lipid modification. The S-palmitoyl cysteine moiety is linked to residue C3. The G-alpha domain maps to 39–379 (ATHRLLLLGA…RMHLRQYELL (341 aa)). The interval 42 to 55 (RLLLLGAGESGKST) is G1 motif. Residues 47-54 (GAGESGKS), 183-189 (LRCRVLT), 208-212 (DVGGQ), 277-280 (NKQD), and A351 each bind GTP. Mg(2+)-binding residues include S54 and T189. Residues 181 to 189 (DILRCRVLT) form a G2 motif region. The segment at 204 to 213 (FHMFDVGGQR) is G3 motif. The G4 motif stretch occupies residues 273–280 (ILFLNKQD). A G5 motif region spans residues 349 to 354 (TCAVDT).

The protein belongs to the G-alpha family. G(s) subfamily. G proteins are composed of 3 units; alpha, beta and gamma. The alpha chain contains the guanine nucleotide binding site.

In terms of biological role, guanine nucleotide-binding proteins (G proteins) are involved as modulators or transducers in various transmembrane signaling systems. The G(s) protein is involved in hormonal regulation of adenylate cyclase: it activates the cyclase in response to beta-adrenergic stimuli. In Homarus americanus (American lobster), this protein is Guanine nucleotide-binding protein G(s) subunit alpha.